The primary structure comprises 343 residues: Probable dual-specificity RNA methyltransferase RlmN (343 aa).

Catalysis depends on glutamate 91, which acts as the Proton acceptor. The 230-residue stretch at 97 to 326 (HPDRITACIS…AEIRREKGAD (230 aa)) folds into the Radical SAM core domain. Residues cysteine 104 and cysteine 331 are joined by a disulfide bond. 3 residues coordinate [4Fe-4S] cluster: cysteine 111, cysteine 115, and cysteine 118. Residues 158-159 (GE), serine 190, 213-215 (SLH), and asparagine 289 each bind S-adenosyl-L-methionine. Cysteine 331 (S-methylcysteine intermediate) is an active-site residue.

The protein belongs to the radical SAM superfamily. RlmN family. [4Fe-4S] cluster serves as cofactor.

It localises to the cytoplasm. The enzyme catalyses adenosine(2503) in 23S rRNA + 2 reduced [2Fe-2S]-[ferredoxin] + 2 S-adenosyl-L-methionine = 2-methyladenosine(2503) in 23S rRNA + 5'-deoxyadenosine + L-methionine + 2 oxidized [2Fe-2S]-[ferredoxin] + S-adenosyl-L-homocysteine. The catalysed reaction is adenosine(37) in tRNA + 2 reduced [2Fe-2S]-[ferredoxin] + 2 S-adenosyl-L-methionine = 2-methyladenosine(37) in tRNA + 5'-deoxyadenosine + L-methionine + 2 oxidized [2Fe-2S]-[ferredoxin] + S-adenosyl-L-homocysteine. Specifically methylates position 2 of adenine 2503 in 23S rRNA and position 2 of adenine 37 in tRNAs. The polypeptide is Probable dual-specificity RNA methyltransferase RlmN (Thermotoga petrophila (strain ATCC BAA-488 / DSM 13995 / JCM 10881 / RKU-1)).